The primary structure comprises 201 residues: Holliday junction resolvase RecU (201 aa).

Mg(2+) contacts are provided by Thr85, Asp87, Glu100, and Gln119.

This sequence belongs to the RecU family. The cofactor is Mg(2+).

It is found in the cytoplasm. The enzyme catalyses Endonucleolytic cleavage at a junction such as a reciprocal single-stranded crossover between two homologous DNA duplexes (Holliday junction).. Functionally, endonuclease that resolves Holliday junction intermediates in genetic recombination. Cleaves mobile four-strand junctions by introducing symmetrical nicks in paired strands. Promotes annealing of linear ssDNA with homologous dsDNA. Required for DNA repair, homologous recombination and chromosome segregation. The sequence is that of Holliday junction resolvase RecU from Geobacillus thermodenitrificans (strain NG80-2).